A 178-amino-acid chain; its full sequence is Large ribosomal subunit protein eL20y (178 aa).

The protein belongs to the eukaryotic ribosomal protein eL20 family.

This is Large ribosomal subunit protein eL20y (RPL18AB) from Arabidopsis thaliana (Mouse-ear cress).